Here is a 381-residue protein sequence, read N- to C-terminus: Homoserine O-succinyltransferase (381 aa).

Positions 45 to 360 (NAVLVCHALN…PHGHDAFLLD (316 aa)) constitute an AB hydrolase-1 domain. Catalysis depends on serine 151, which acts as the Nucleophile. Position 221 (arginine 221) interacts with substrate. Residues aspartate 321 and histidine 354 contribute to the active site. Aspartate 355 serves as a coordination point for substrate.

The protein belongs to the AB hydrolase superfamily. MetX family. Homodimer.

The protein resides in the cytoplasm. The enzyme catalyses L-homoserine + succinyl-CoA = O-succinyl-L-homoserine + CoA. The protein operates within amino-acid biosynthesis; L-methionine biosynthesis via de novo pathway; O-succinyl-L-homoserine from L-homoserine: step 1/1. Transfers a succinyl group from succinyl-CoA to L-homoserine, forming succinyl-L-homoserine. The chain is Homoserine O-succinyltransferase from Paraburkholderia phymatum (strain DSM 17167 / CIP 108236 / LMG 21445 / STM815) (Burkholderia phymatum).